Consider the following 250-residue polypeptide: Small ribosomal subunit protein uS2 (250 aa).

Belongs to the universal ribosomal protein uS2 family.

This is Small ribosomal subunit protein uS2 from Marinobacter nauticus (strain ATCC 700491 / DSM 11845 / VT8) (Marinobacter aquaeolei).